Reading from the N-terminus, the 413-residue chain is Dual-specificity RNA methyltransferase RlmN (413 aa).

The Proton acceptor role is filled by Glu126. The Radical SAM core domain maps to 132 to 381; sequence EEGRGTLCIS…IRTPRGRDIL (250 aa). Cys139 and Cys384 are joined by a disulfide. Positions 146, 150, and 153 each coordinate [4Fe-4S] cluster. S-adenosyl-L-methionine is bound by residues 210–211, Ser242, 264–266, and Asn341; these read GE and SLH. Cys384 serves as the catalytic S-methylcysteine intermediate.

This sequence belongs to the radical SAM superfamily. RlmN family. [4Fe-4S] cluster is required as a cofactor.

Its subcellular location is the cytoplasm. It catalyses the reaction adenosine(2503) in 23S rRNA + 2 reduced [2Fe-2S]-[ferredoxin] + 2 S-adenosyl-L-methionine = 2-methyladenosine(2503) in 23S rRNA + 5'-deoxyadenosine + L-methionine + 2 oxidized [2Fe-2S]-[ferredoxin] + S-adenosyl-L-homocysteine. The enzyme catalyses adenosine(37) in tRNA + 2 reduced [2Fe-2S]-[ferredoxin] + 2 S-adenosyl-L-methionine = 2-methyladenosine(37) in tRNA + 5'-deoxyadenosine + L-methionine + 2 oxidized [2Fe-2S]-[ferredoxin] + S-adenosyl-L-homocysteine. In terms of biological role, specifically methylates position 2 of adenine 2503 in 23S rRNA and position 2 of adenine 37 in tRNAs. m2A2503 modification seems to play a crucial role in the proofreading step occurring at the peptidyl transferase center and thus would serve to optimize ribosomal fidelity. This chain is Dual-specificity RNA methyltransferase RlmN, found in Sinorhizobium medicae (strain WSM419) (Ensifer medicae).